A 322-amino-acid polypeptide reads, in one-letter code: Peroxidase 66 (322 aa).

Positions 1 to 24 (MAFSKGLIFAMIFAVLAIVKPSEA) are cleaved as a signal peptide. 2 disulfide bridges follow: cysteine 35/cysteine 114 and cysteine 68/cysteine 73. Residue histidine 66 is the Proton acceptor of the active site. Ca(2+) contacts are provided by aspartate 67, glycine 72, aspartate 74, and serine 76. Asparagine 155 carries N-linked (GlcNAc...) asparagine glycosylation. A substrate-binding site is contributed by proline 161. Asparagine 166 is a glycosylation site (N-linked (GlcNAc...) asparagine). Histidine 191 provides a ligand contact to heme b. Threonine 192 lines the Ca(2+) pocket. Residues cysteine 198 and cysteine 230 are joined by a disulfide bond. Residue asparagine 207 is glycosylated (N-linked (GlcNAc...) asparagine). 3 residues coordinate Ca(2+): aspartate 245, threonine 247, and aspartate 252.

Belongs to the peroxidase family. Classical plant (class III) peroxidase subfamily. Heme b is required as a cofactor. Requires Ca(2+) as cofactor.

It is found in the secreted. It catalyses the reaction 2 a phenolic donor + H2O2 = 2 a phenolic radical donor + 2 H2O. Removal of H(2)O(2), oxidation of toxic reductants, biosynthesis and degradation of lignin, suberization, auxin catabolism, response to environmental stresses such as wounding, pathogen attack and oxidative stress. These functions might be dependent on each isozyme/isoform in each plant tissue. In Arabidopsis thaliana (Mouse-ear cress), this protein is Peroxidase 66 (PER66).